A 505-amino-acid polypeptide reads, in one-letter code: Cytochrome P450 4Z1 (505 aa).

Topologically, residues 1-9 (MEPSWLQEL) are cytoplasmic. Residues 10–30 (MAHPFLLLILLCMSLLLFQVI) traverse the membrane as a helical; Signal-anchor for type II membrane protein segment. Over 31 to 505 (RLYQRRRWMI…GIHVFAKKVC (475 aa)) the chain is Lumenal. Heme is bound at residue C452.

Belongs to the cytochrome P450 family. Requires heme as cofactor. As to expression, preferentially detected in breast carcinoma tissue and mammary gland, whereas only marginal expression is found in all other tested tissues.

It localises to the endoplasmic reticulum membrane. Its subcellular location is the microsome membrane. The enzyme catalyses an organic molecule + reduced [NADPH--hemoprotein reductase] + O2 = an alcohol + oxidized [NADPH--hemoprotein reductase] + H2O + H(+). It carries out the reaction dodecanoate + reduced [NADPH--hemoprotein reductase] + O2 = 7-hydroxydodecanoate + oxidized [NADPH--hemoprotein reductase] + H2O + H(+). The catalysed reaction is dodecanoate + reduced [NADPH--hemoprotein reductase] + O2 = 8-hydroxydodecanoate + oxidized [NADPH--hemoprotein reductase] + H2O + H(+). It catalyses the reaction dodecanoate + reduced [NADPH--hemoprotein reductase] + O2 = 9-hydroxydodecanoate + oxidized [NADPH--hemoprotein reductase] + H2O + H(+). The enzyme catalyses dodecanoate + reduced [NADPH--hemoprotein reductase] + O2 = 10-hydroxydodecanoate + oxidized [NADPH--hemoprotein reductase] + H2O + H(+). It carries out the reaction dodecanoate + reduced [NADPH--hemoprotein reductase] + O2 = 11-hydroxydodecanoate + oxidized [NADPH--hemoprotein reductase] + H2O + H(+). The catalysed reaction is tetradecanoate + reduced [NADPH--hemoprotein reductase] + O2 = 9-hydroxytetradecanoate + oxidized [NADPH--hemoprotein reductase] + H2O + H(+). It catalyses the reaction tetradecanoate + reduced [NADPH--hemoprotein reductase] + O2 = 10-hydroxytetradecanoate + oxidized [NADPH--hemoprotein reductase] + H2O + H(+). The enzyme catalyses tetradecanoate + reduced [NADPH--hemoprotein reductase] + O2 = 11-hydroxytetradecanoate + oxidized [NADPH--hemoprotein reductase] + H2O + H(+). It carries out the reaction tetradecanoate + reduced [NADPH--hemoprotein reductase] + O2 = 12-hydroxytetradecanoate + oxidized [NADPH--hemoprotein reductase] + H2O + H(+). The catalysed reaction is (5Z,8Z,11Z,14Z)-eicosatetraenoate + reduced [NADPH--hemoprotein reductase] + O2 = (14S,15R)-epoxy-(5Z,8Z,11Z)-eicosatrienoate + oxidized [NADPH--hemoprotein reductase] + H2O + H(+). Functionally, a cytochrome P450 monooxygenase that catalyzes the in-chain oxidation of fatty acids. Catalyzes the hydroxylation of carbon-hydrogen bonds. Hydroxylates lauric and myristic acids predominantly at the omega-4 and omega-2 positions, respectively. Catalyzes the epoxidation of double bonds of polyunsaturated fatty acids (PUFA). Displays an absolute stereoselectivity in the epoxidation of arachidonic acid producing the 14(S),15(R)-epoxyeicosatrienoic acid (EET) enantiomer. Mechanistically, uses molecular oxygen inserting one oxygen atom into a substrate, and reducing the second into a water molecule, with two electrons provided by NADPH via cytochrome P450 reductase (CPR; NADPH-ferrihemoprotein reductase). In Homo sapiens (Human), this protein is Cytochrome P450 4Z1.